Here is a 514-residue protein sequence, read N- to C-terminus: Na(+)/H(+) antiporter NhaB (514 aa).

12 helical membrane passes run 23-43, 52-72, 97-117, 120-140, 144-164, 202-222, 238-258, 303-323, 353-373, 391-411, 447-467, and 475-495; these read LALLIFLIINPLIFLVNPFIA, IFTLAMALKCYPLLPGGLLAI, LLLMFMVAGIYFMKQLLLFIF, LLLSIRSKALLSLSFCLAAAF, FLDALTVVAVVISVAVGFYGI, LMMHAGVGTALGGVMTMVGEP, FFLRMSPITVPVLVCGLLTCL, ALIGIWLVIALALHLAEVGLI, FTALLTVFFSIVAVIIDQSLF, LFYLFNGLLSSISDNVFVGTI, ATPNGQAAFLFLLTSALAPLI, and VWMALPYTIVLTCVGLLCVEF.

This sequence belongs to the NhaB Na(+)/H(+) (TC 2.A.34) antiporter family.

It is found in the cell inner membrane. The catalysed reaction is 2 Na(+)(in) + 3 H(+)(out) = 2 Na(+)(out) + 3 H(+)(in). Na(+)/H(+) antiporter that extrudes sodium in exchange for external protons. The sequence is that of Na(+)/H(+) antiporter NhaB from Escherichia fergusonii (strain ATCC 35469 / DSM 13698 / CCUG 18766 / IAM 14443 / JCM 21226 / LMG 7866 / NBRC 102419 / NCTC 12128 / CDC 0568-73).